Reading from the N-terminus, the 384-residue chain is NAD-capped RNA hydrolase NPY1 (384 aa).

Zn(2+) is bound by residues Cys179, Cys182, Cys197, and Cys206. The Nudix hydrolase domain occupies 219–351 (PRTDPTVIIA…AGGYRVPFKN (133 aa)). Residues Ala256, Glu272, Glu276, and Glu322 each contribute to the Mg(2+) site. Residues 256–258 (AGF), Glu272, Glu276, and Glu322 each bind substrate. The Nudix box motif lies at 257-278 (GFMEPSETIEEACIREIWEETG). The short motif at 378-380 (KTS) is the Microbody targeting signal element.

It belongs to the Nudix hydrolase family. NudC subfamily. Homodimer. Requires Mg(2+) as cofactor. The cofactor is Zn(2+).

The protein resides in the peroxisome. The enzyme catalyses a 5'-end NAD(+)-phospho-ribonucleoside in mRNA + H2O = a 5'-end phospho-adenosine-phospho-ribonucleoside in mRNA + beta-nicotinamide D-ribonucleotide + 2 H(+). The catalysed reaction is NAD(+) + H2O = beta-nicotinamide D-ribonucleotide + AMP + 2 H(+). It carries out the reaction NADH + H2O = reduced beta-nicotinamide D-ribonucleotide + AMP + 2 H(+). Functionally, mRNA decapping enzyme that specifically removes the nicotinamide adenine dinucleotide (NAD) cap from a subset of mRNAs by hydrolyzing the diphosphate linkage to produce nicotinamide mononucleotide (NMN) and 5' monophosphate mRNA. The NAD-cap is present at the 5'-end of some RNAs; in contrast to the canonical N7 methylguanosine (m7G) cap, the NAD cap promotes mRNA decay. Mediates the hydrolysis of some nucleoside diphosphate derivatives. The protein is NAD-capped RNA hydrolase NPY1 of Saccharomyces cerevisiae (strain ATCC 204508 / S288c) (Baker's yeast).